The primary structure comprises 1258 residues: Regulator of G-protein signaling 22 (1258 aa).

The interval Q581 to K604 is disordered. RGS domains lie at T845–Q973 and A1014–K1138. The interval R1145–A1172 is disordered. The span at K1154–G1164 shows a compositional bias: basic and acidic residues.

In terms of assembly, interacts with GNA11, GNA12 and GNA13. Expressed testis, including in Leydig cells and spermatogenic cells from the spermatogonia to spermatid stages (at protein level).

The protein resides in the cytoplasm. Its subcellular location is the nucleus. Functionally, inhibits signal transduction by increasing the GTPase activity of G protein alpha subunits thereby driving them into their inactive GDP-bound form. The protein is Regulator of G-protein signaling 22 (Rgs22) of Mus musculus (Mouse).